Here is a 461-residue protein sequence, read N- to C-terminus: Bifunctional protein GlmU (461 aa).

The pyrophosphorylase stretch occupies residues 1–230; it reads MECLMAVILA…SSEILGINDR (230 aa). UDP-N-acetyl-alpha-D-glucosamine-binding positions include 9–12, Lys-23, Gln-73, 78–79, 101–103, Gly-140, Glu-155, Asn-170, and Asn-228; these read LAAG, GT, and YGD. Residue Asp-103 coordinates Mg(2+). Asn-228 provides a ligand contact to Mg(2+). The segment at 231 to 251 is linker; the sequence is VQLAEAGRIIRSRILKRHMKN. Residues 252–461 are N-acetyltransferase; it reads GVTIIDPDST…KKGMLRQEKE (210 aa). Arg-333 and Lys-351 together coordinate UDP-N-acetyl-alpha-D-glucosamine. The active-site Proton acceptor is the His-363. UDP-N-acetyl-alpha-D-glucosamine-binding residues include Tyr-366 and Asn-377. Acetyl-CoA is bound by residues 386-387, Ala-423, and Arg-440; that span reads NY.

It in the N-terminal section; belongs to the N-acetylglucosamine-1-phosphate uridyltransferase family. This sequence in the C-terminal section; belongs to the transferase hexapeptide repeat family. Homotrimer. Mg(2+) serves as cofactor.

Its subcellular location is the cytoplasm. It catalyses the reaction alpha-D-glucosamine 1-phosphate + acetyl-CoA = N-acetyl-alpha-D-glucosamine 1-phosphate + CoA + H(+). It carries out the reaction N-acetyl-alpha-D-glucosamine 1-phosphate + UTP + H(+) = UDP-N-acetyl-alpha-D-glucosamine + diphosphate. The protein operates within nucleotide-sugar biosynthesis; UDP-N-acetyl-alpha-D-glucosamine biosynthesis; N-acetyl-alpha-D-glucosamine 1-phosphate from alpha-D-glucosamine 6-phosphate (route II): step 2/2. Its pathway is nucleotide-sugar biosynthesis; UDP-N-acetyl-alpha-D-glucosamine biosynthesis; UDP-N-acetyl-alpha-D-glucosamine from N-acetyl-alpha-D-glucosamine 1-phosphate: step 1/1. It functions in the pathway bacterial outer membrane biogenesis; LPS lipid A biosynthesis. Its function is as follows. Catalyzes the last two sequential reactions in the de novo biosynthetic pathway for UDP-N-acetylglucosamine (UDP-GlcNAc). The C-terminal domain catalyzes the transfer of acetyl group from acetyl coenzyme A to glucosamine-1-phosphate (GlcN-1-P) to produce N-acetylglucosamine-1-phosphate (GlcNAc-1-P), which is converted into UDP-GlcNAc by the transfer of uridine 5-monophosphate (from uridine 5-triphosphate), a reaction catalyzed by the N-terminal domain. This Acetivibrio thermocellus (strain ATCC 27405 / DSM 1237 / JCM 9322 / NBRC 103400 / NCIMB 10682 / NRRL B-4536 / VPI 7372) (Clostridium thermocellum) protein is Bifunctional protein GlmU.